Here is a 179-residue protein sequence, read N- to C-terminus: Cell division protein SepF (179 aa).

A disordered region spans residues 22–53 (LPYEKRDEPVFTPVNSSQEPALPMNQPSQSVG). A compositionally biased stretch (polar residues) spans 34–53 (PVNSSQEPALPMNQPSQSVG).

This sequence belongs to the SepF family. In terms of assembly, homodimer. Interacts with FtsZ.

The protein localises to the cytoplasm. Functionally, cell division protein that is part of the divisome complex and is recruited early to the Z-ring. Probably stimulates Z-ring formation, perhaps through the cross-linking of FtsZ protofilaments. Its function overlaps with FtsA. The protein is Cell division protein SepF of Streptococcus pneumoniae (strain P1031).